A 56-amino-acid polypeptide reads, in one-letter code: Attractin (56 aa).

Intrachain disulfides connect C4–C41, C13–C33, and C20–C26. A glycan (N-linked (GlcNAc...) asparagine) is linked at N25.

In terms of tissue distribution, produced by the albumen gland of the egg cordons.

The protein resides in the secreted. Water-borne pheromone that attract the marine mollusk Aplysia into breeding aggregations and coordinate male and female reproductive behavior within the aggregation. This is Attractin (ATT) from Aplysia depilans (Sea hare).